The following is a 367-amino-acid chain: Chorismate synthase (367 aa).

The disordered stretch occupies residues 41–60 (FTHDLQRRASGKSRHTSARR). NADP(+) contacts are provided by arginine 48 and arginine 54. FMN-binding positions include 125-127 (RSS), 238-239 (NA), glycine 278, 293-297 (KPTSS), and arginine 319.

The protein belongs to the chorismate synthase family. Homotetramer. The cofactor is FMNH2.

It catalyses the reaction 5-O-(1-carboxyvinyl)-3-phosphoshikimate = chorismate + phosphate. Its pathway is metabolic intermediate biosynthesis; chorismate biosynthesis; chorismate from D-erythrose 4-phosphate and phosphoenolpyruvate: step 7/7. Functionally, catalyzes the anti-1,4-elimination of the C-3 phosphate and the C-6 proR hydrogen from 5-enolpyruvylshikimate-3-phosphate (EPSP) to yield chorismate, which is the branch point compound that serves as the starting substrate for the three terminal pathways of aromatic amino acid biosynthesis. This reaction introduces a second double bond into the aromatic ring system. The sequence is that of Chorismate synthase from Xanthomonas euvesicatoria pv. vesicatoria (strain 85-10) (Xanthomonas campestris pv. vesicatoria).